A 739-amino-acid polypeptide reads, in one-letter code: Lysyl oxidase homolog 3A (739 aa).

Positions 1–25 are cleaved as a signal peptide; sequence MLRSELRDMVVAMVLWGILLPFCLS. 4 consecutive SRCR domains span residues 38 to 139, 166 to 272, 293 to 393, and 403 to 511; these read FRLA…VICK, LRPL…VSCV, MRLK…VICN, and MRLT…VICS. 12 cysteine pairs are disulfide-bonded: Cys64/Cys128, Cys77/Cys138, Cys108/Cys118, Cys196/Cys261, Cys209/Cys271, Cys238/Cys248, Cys318/Cys382, Cys331/Cys392, Cys362/Cys372, Cys433/Cys497, Cys446/Cys510, and Cys479/Cys489. The N-linked (GlcNAc...) asparagine glycan is linked to Asn256. A glycan (N-linked (GlcNAc...) asparagine) is linked at Asn468. Residue Asn611 is glycosylated (N-linked (GlcNAc...) asparagine). A cross-link (lysine tyrosylquinone (Lys-Tyr)) is located at residues 620-656; the sequence is KASFCLEDTECHEGVSKRYECANFGEQGITVGCWDLY. Position 656 is a 2',4',5'-topaquinone (Tyr656).

The protein belongs to the lysyl oxidase family. Cu cation serves as cofactor. The cofactor is lysine tyrosylquinone residue. Post-translationally, the lysine tyrosylquinone cross-link (LTQ) is generated by condensation of the epsilon-amino group of a lysine with a topaquinone produced by oxidation of tyrosine.

Its subcellular location is the secreted. It is found in the extracellular space. It localises to the cytoplasm. The protein localises to the nucleus. The enzyme catalyses L-lysyl-[protein] + O2 + H2O = (S)-2-amino-6-oxohexanoyl-[protein] + H2O2 + NH4(+). It catalyses the reaction N(6)-acetyl-L-lysyl-[protein] + O2 + H2O = acetamide + (S)-2-amino-6-oxohexanoyl-[protein] + H2O2. Its function is as follows. Protein-lysine 6-oxidase that mediates the oxidation of peptidyl lysine residues to allysine in target proteins. Catalyzes the post-translational oxidative deamination of peptidyl lysine residues in precursors of elastin and different types of collagens, a prerequisite in the formation of cross-links between collagens and elastin. Can mediate oxidation of lysine residues that are acetylated. Also able to catalyze deacetylation of lysine residues. This chain is Lysyl oxidase homolog 3A, found in Danio rerio (Zebrafish).